The primary structure comprises 308 residues: HTH-type transcriptional activator AllS (308 aa).

Positions 2-59 (FDPETLRTFIAVAETGSFSKAAERLCKTTATISYRIKLLEENTGVALFFRTTRSVTLT) constitute an HTH lysR-type domain. The H-T-H motif DNA-binding region spans 19 to 38 (FSKAAERLCKTTATISYRIK).

This sequence belongs to the LysR transcriptional regulatory family.

Positive regulator essential for the expression of AllD operon. Binds to the AllD promoter. This Escherichia coli O157:H7 protein is HTH-type transcriptional activator AllS (allS).